The primary structure comprises 216 residues: UPF0193 protein EVG1 homolog (216 aa).

The protein belongs to the UPF0193 (EVG1) family.

The protein is UPF0193 protein EVG1 homolog of Mus musculus (Mouse).